Here is a 1903-residue protein sequence, read N- to C-terminus: CDK5 regulatory subunit-associated protein 2 (1903 aa).

Positions 51–94 (KVSPTRARNMKDFENQITELKKENFNLKLRIYFLEERIQQEFAG) are CM1 motif; interacts with the gTuRC. The segment at 244–282 (KSQMASPDENVSSGELRGLSATLREEKERDAEERQKERN) is disordered. Positions 246–256 (QMASPDENVSS) are enriched in polar residues. Over residues 266-282 (LREEKERDAEERQKERN) the composition is skewed to basic and acidic residues. A phosphoserine mark is found at S485 and S544. The disordered stretch occupies residues 1022–1044 (GKPGEQEGHETTHSAGRDKEVDS). Positions 1025-1043 (GEQEGHETTHSAGRDKEVD) are enriched in basic and acidic residues. Phosphothreonine is present on T1193. A phosphoserine mark is found at S1241 and S1243. The tract at residues 1349-1387 (QHLLPESPEPSASHALSDDEMSEKSFLSREPKPDSETEK) is disordered. Positions 1370 to 1387 (SEKSFLSREPKPDSETEK) are enriched in basic and acidic residues. Residues S1495, S1673, and S1676 each carry the phosphoserine modification. The tract at residues 1736–1778 (HMLCLIEDYDALYKQISWGQTLLAKMDIQTQEALSPTSQKLGP) is interaction with CDK5R1. Required for centrosomal attachment, Golgi localization and CALM1 interaction stretches follow at residues 1736-1903 (HMLC…RPGS) and 1871-1880 (VITHQVLRKA). The segment at 1883 to 1903 (NLELRPRAAHPGTSSPSRPGS) is disordered. Residues 1894–1903 (GTSSPSRPGS) are compositionally biased toward polar residues. At S1903 the chain carries Phosphoserine.

As to quaternary structure, homodimer. Interacts with CDK5R1 (p35 form). CDK5RAP1, CDK5RAP2 and CDK5RAP3 show competitive binding to CDK5R1. May form a complex with CDK5R1 and CDK5. Interacts with pericentrin/PCNT; the interaction is leading to centrosomal and Golgi localization of CDK5RAP2 and PCNT. Interacts with AKAP9; the interaction targets CDK5RAP2 and AKAP9 to Golgi apparatus. Interacts with TUBG1; the interaction is leading to the centrosomal localization of CDK5RAP2 and TUBG1. Interacts with TUBGCP3. Interacts with CALM1. Interacts with CDC20. Interacts with CEP68; degradation of CEP68 in early mitosis leads to removal of CDK5RAP2 from the centrosome which promotes centriole disengagement and subsequent centriole separation. Interacts with NCKAP5L. Interacts with LGALS3BP; this interaction may connect the pericentrosomal complex to the gamma-tubulin ring complex (gTuRC) to promote microtubule assembly and acetylation. Contrary to human, chimpanzee, bovine and dog orthologous proteins, does not interact with EB1/MAPRE1, possibly due to a divergence at the level of the critical residue 939, which is a proline in MAPRE1-binding orthologs and a leucine in mouse and rat. Interacts with CCDC66. Associates (via CM1 motif) with TUBGCP2 of the gTuRC; the interaction plays a role in gTuRC activation. Phosphorylated in vitro by CDK5.

Its subcellular location is the cytoplasm. It localises to the cytoskeleton. It is found in the microtubule organizing center. The protein resides in the centrosome. The protein localises to the golgi apparatus. Its function is as follows. Potential regulator of CDK5 activity via its interaction with CDK5R1. Negative regulator of centriole disengagement (licensing) which maintains centriole engagement and cohesion. Involved in regulation of mitotic spindle orientation. Plays a role in the spindle checkpoint activation by acting as a transcriptional regulator of both BUBR1 and MAD2 promoter. Together with EB1/MAPRE1, may promote microtubule polymerization, bundle formation, growth and dynamics at the plus ends. Regulates centrosomal maturation by recruitment of the gamma-tubulin ring complex (gTuRC) onto centrosomes. In complex with PDE4DIP isoform 13/MMG8/SMYLE, MAPRE1 and AKAP9, contributes to microtubules nucleation and extension from the centrosome to the cell periphery. Required for the recruitment of AKAP9 to centrosomes. Plays a role in neurogenesis. This Rattus norvegicus (Rat) protein is CDK5 regulatory subunit-associated protein 2 (Cdk5rap2).